We begin with the raw amino-acid sequence, 309 residues long: Mitochondrial substrate carrier family protein ancA (309 aa).

Solcar repeat units lie at residues 10–102, 114–203, and 216–299; these read SSFV…YKKF, KFFI…AKGI, and ASWG…IQKL. A run of 5 helical transmembrane segments spans residues 12-41, 79-103, 113-133, 181-201, and 215-235; these read FVKD…LLLQ, LANV…KKFF, TKFF…SLLF, VSVG…DTAK, and WASW…SYPF. ADP is bound by residues arginine 84 and lysine 96. Arginine 239 serves as a coordination point for ADP. Residues 239–244 are important for transport activity; the sequence is RRRMMM. The short motif at 239–244 is the Nucleotide carrier signature motif element; it reads RRRMMM. The chain crosses the membrane as a helical span at residues 276 to 293; sequence ALSNAIRGSGGALVLVIY.

Belongs to the mitochondrial carrier (TC 2.A.29) family. In terms of assembly, monomer.

The protein resides in the mitochondrion inner membrane. It catalyses the reaction ADP(in) + ATP(out) = ADP(out) + ATP(in). Its activity is regulated as follows. The matrix-open state (m-state) is inhibited by the membrane-permeable bongkrekic acid (BKA). The cytoplasmic-open state (c-state) is inhibited by the membrane-impermeable toxic inhibitor carboxyatractyloside (CATR). Functionally, ADP:ATP antiporter that mediates import of ADP into the mitochondrial matrix for ATP synthesis, and export of ATP out to fuel the cell. Cycles between the cytoplasmic-open state (c-state) and the matrix-open state (m-state): operates by the alternating access mechanism with a single substrate-binding site intermittently exposed to either the cytosolic (c-state) or matrix (m-state) side of the inner mitochondrial membrane. This chain is Mitochondrial substrate carrier family protein ancA (ancA), found in Dictyostelium discoideum (Social amoeba).